The chain runs to 208 residues: Regulator of G-protein signaling 4 (208 aa).

S-palmitoyl cysteine attachment occurs at residues C2, C12, and C95. Residues 62–178 (SLENLIHHDR…LKSPYLDLVS (117 aa)) form the RGS domain.

In terms of processing, palmitoylated on Cys-2 and/or Cys-12. Phosphorylated by cyclic GMP-dependent protein kinase. As to expression, expressed in the developing nervous system.

Its function is as follows. Inhibits signal transduction by increasing the GTPase activity of G protein alpha subunits thereby driving them into their inactive GDP-bound form. Activity on G(z)-alpha is inhibited by phosphorylation of the G-protein. Activity on G(z)-alpha and G(i)-alpha-1 is inhibited by palmitoylation of the G-protein. The sequence is that of Regulator of G-protein signaling 4 (RGS4) from Gallus gallus (Chicken).